Consider the following 306-residue polypeptide: Probable GTP 3',8-cyclase (306 aa).

The Radical SAM core domain occupies 5 to 232 (RFGRPVTNLR…RRRKYFLPVD (228 aa)). GTP is bound at residue arginine 14. Residues cysteine 21 and cysteine 25 each coordinate [4Fe-4S] cluster. Residue tyrosine 27 coordinates S-adenosyl-L-methionine. Cysteine 28 contributes to the [4Fe-4S] cluster binding site. GTP is bound at residue lysine 61. Glycine 65 is a binding site for S-adenosyl-L-methionine. Threonine 90 contributes to the GTP binding site. Serine 114 contacts S-adenosyl-L-methionine. Lysine 150 serves as a coordination point for GTP. S-adenosyl-L-methionine is bound at residue methionine 189. Cysteine 250 and cysteine 253 together coordinate [4Fe-4S] cluster. 255-257 (RLR) contributes to the GTP binding site. Residue cysteine 267 participates in [4Fe-4S] cluster binding.

Belongs to the radical SAM superfamily. MoaA family. Requires [4Fe-4S] cluster as cofactor.

It catalyses the reaction GTP + AH2 + S-adenosyl-L-methionine = (8S)-3',8-cyclo-7,8-dihydroguanosine 5'-triphosphate + 5'-deoxyadenosine + L-methionine + A + H(+). It functions in the pathway cofactor biosynthesis; molybdopterin biosynthesis. Its function is as follows. Catalyzes the cyclization of GTP to (8S)-3',8-cyclo-7,8-dihydroguanosine 5'-triphosphate. In Pyrococcus abyssi (strain GE5 / Orsay), this protein is Probable GTP 3',8-cyclase.